We begin with the raw amino-acid sequence, 553 residues long: MGSRSSTRIPVPLMLTVRIMLALSCVCPTSSLDGRPLAAAGIVVTGDKAVNIYTSSQTGSIIIKLLPNMPKDKEACAKAPLEAYNRTLTTLLTPLGDSIRRIQESVTTSGGGKQGRLIGAIIGGVALGVATAAQITAASALIQANQNAANILRLKESIAATNEAVHEVTDGLSQLAVAVGKMQQFVNDQFNKTAQELDCIKITQQVGVELNLYLTELTTVFGPQITSPALTQLTIQALYNLAGGNMDYLLTKLGVGNNQLSSLIGSGLITGNPILYDSQTQLLGIQVTLPSVGNLNNMRATYLETLSVSTTKGFASALVPKVVTQVGSVIEELDTSYCIETDLDLYCTRIVTFPMSPGIYSCLSGNTSACMYSKTEGALTTPYMTLKGSVIANCKMTTCRCADPPGIISQNYGEAVSLIDRQSCNILSLDGITLRLSGEFDATYQKNISIQDSQVIVTGNLDISTELGNVNNSISNALDKLEESNSKLDKVNVKLTSTSALITYIFLTVISLVCGILSLVLACYLMYKQKAQQKTLLWLGNNTLDQMRATTKM.

Residues Met1–Ser31 form the signal peptide. Topologically, residues Leu32–Ala500 are extracellular. 5 disulfides stabilise this stretch: Cys76/Cys199, Cys338/Cys347, Cys362/Cys370, Cys394/Cys399, and Cys401/Cys424. Asn85 carries an N-linked (GlcNAc...) asparagine; by host glycan. A fusion peptide region spans residues Leu117–Leu141. Residues Ile142–Asp170 are a coiled coil. An N-linked (GlcNAc...) asparagine; by host glycan is attached at Asn191. A glycan (N-linked (GlcNAc...) asparagine; by host) is linked at Asn366. Asn447 and Asn471 each carry an N-linked (GlcNAc...) asparagine; by host glycan. Positions Glu466–Val491 form a coiled coil. A helical membrane pass occupies residues Leu501–Leu521. At Ala522–Met553 the chain is on the cytoplasmic side. Cys523 carries the S-palmitoyl cysteine; by host lipid modification.

The protein belongs to the paramyxoviruses fusion glycoprotein family. Homotrimer of disulfide-linked F1-F2. In terms of processing, the inactive precursor F0 is glycosylated and proteolytically cleaved into F1 and F2 to be functionally active. The cleavage is mediated by cellular proteases during the transport and maturation of the polypeptide.

It is found in the virion membrane. The protein resides in the host cell membrane. Its function is as follows. Class I viral fusion protein. Under the current model, the protein has at least 3 conformational states: pre-fusion native state, pre-hairpin intermediate state, and post-fusion hairpin state. During viral and plasma cell membrane fusion, the heptad repeat (HR) regions assume a trimer-of-hairpins structure, positioning the fusion peptide in close proximity to the C-terminal region of the ectodomain. The formation of this structure appears to drive apposition and subsequent fusion of viral and plasma cell membranes. Directs fusion of viral and cellular membranes leading to delivery of the nucleocapsid into the cytoplasm. This fusion is pH independent and occurs directly at the outer cell membrane. The trimer of F1-F2 (F protein) probably interacts with HN at the virion surface. Upon HN binding to its cellular receptor, the hydrophobic fusion peptide is unmasked and interacts with the cellular membrane, inducing the fusion between cell and virion membranes. Later in infection, F proteins expressed at the plasma membrane of infected cells could mediate fusion with adjacent cells to form syncytia, a cytopathic effect that could lead to tissue necrosis. This chain is Fusion glycoprotein F0 (F), found in Newcastle disease virus (strain D26/76) (NDV).